Consider the following 504-residue polypeptide: UNC93-like protein C922.05c (504 aa).

11 helical membrane-spanning segments follow: residues 64–84, 97–116, 123–145, 149–169, 186–206, 219–239, 275–293, 310–330, 343–363, 391–411, and 452–472; these read IIVS…SGLG, ANVA…GSIC, LTLA…YKHV, GFVI…WAAQ, IAIF…VPLA, GTYA…LFMV, YWVL…FTTY, LNNL…ALFL, VGWG…LAFQ, FLYI…YWII, and YFAS…PVIW.

This sequence belongs to the unc-93 family.

It is found in the cytoplasm. The protein localises to the membrane. The protein is UNC93-like protein C922.05c of Schizosaccharomyces pombe (strain 972 / ATCC 24843) (Fission yeast).